A 250-amino-acid polypeptide reads, in one-letter code: Flavin-dependent thymidylate synthase (250 aa).

The 227-residue stretch at 7–233 folds into the ThyX domain; that stretch reads LRVQLIAKTD…PSIFGDFDIA (227 aa). FAD-binding positions include serine 71, 95 to 97, and glutamine 103; that span reads RHR. DUMP contacts are provided by residues 92 to 95, 103 to 107, and arginine 172; these read ELIR and QLSQR. Positions 95-105 match the ThyX motif motif; the sequence is RHRHFSYSQLS. FAD-binding positions include 188 to 190 and histidine 194; that span reads NYR. DUMP is bound at residue arginine 199. Catalysis depends on arginine 199, which acts as the Involved in ionization of N3 of dUMP, leading to its activation.

It belongs to the thymidylate synthase ThyX family. Homotetramer. Requires FAD as cofactor.

The enzyme catalyses dUMP + (6R)-5,10-methylene-5,6,7,8-tetrahydrofolate + NADPH + H(+) = dTMP + (6S)-5,6,7,8-tetrahydrofolate + NADP(+). It participates in pyrimidine metabolism; dTTP biosynthesis. Its function is as follows. Catalyzes the reductive methylation of 2'-deoxyuridine-5'-monophosphate (dUMP) to 2'-deoxythymidine-5'-monophosphate (dTMP) while utilizing 5,10-methylenetetrahydrofolate (mTHF) as the methyl donor, and NADPH and FADH(2) as the reductant. This Mycobacteroides abscessus (strain ATCC 19977 / DSM 44196 / CCUG 20993 / CIP 104536 / JCM 13569 / NCTC 13031 / TMC 1543 / L948) (Mycobacterium abscessus) protein is Flavin-dependent thymidylate synthase.